We begin with the raw amino-acid sequence, 274 residues long: Diaminopimelate epimerase (274 aa).

Residues asparagine 11, glutamine 44, and asparagine 64 each coordinate substrate. The active-site Proton donor is the cysteine 73. Substrate contacts are provided by residues 74–75 (GN), asparagine 157, asparagine 190, and 208–209 (ER). The active-site Proton acceptor is the cysteine 217. Substrate is bound at residue 218 to 219 (GS).

Belongs to the diaminopimelate epimerase family. As to quaternary structure, homodimer.

The protein localises to the cytoplasm. It carries out the reaction (2S,6S)-2,6-diaminopimelate = meso-2,6-diaminopimelate. Its pathway is amino-acid biosynthesis; L-lysine biosynthesis via DAP pathway; DL-2,6-diaminopimelate from LL-2,6-diaminopimelate: step 1/1. Catalyzes the stereoinversion of LL-2,6-diaminopimelate (L,L-DAP) to meso-diaminopimelate (meso-DAP), a precursor of L-lysine and an essential component of the bacterial peptidoglycan. In Histophilus somni (strain 129Pt) (Haemophilus somnus), this protein is Diaminopimelate epimerase.